Reading from the N-terminus, the 817-residue chain is Putative ATP-dependent RNA helicase R350 (817 aa).

Residues 1 to 29 (MNRRNRSNDLNPEPSIENPNNQIAEEFPG) form a disordered region. Polar residues predominate over residues 17–29 (ENPNNQIAEEFPG). Positions 93–271 (LNPQGPYTSI…ALMFNLLRPG (179 aa)) constitute a Helicase ATP-binding domain. 106 to 113 (HGLGSGKT) provides a ligand contact to ATP. The DEAH box motif lies at 206–209 (DEAH). The region spanning 495–661 (LAIAFMTYIS…STDEYVEDQA (167 aa)) is the Helicase C-terminal domain.

It belongs to the DEAD box helicase family. DEAH subfamily.

The protein resides in the virion. It catalyses the reaction ATP + H2O = ADP + phosphate + H(+). The chain is Putative ATP-dependent RNA helicase R350 from Acanthamoeba polyphaga mimivirus (APMV).